Here is a 271-residue protein sequence, read N- to C-terminus: Ribosomal RNA small subunit methyltransferase A (271 aa).

H11, L13, G38, E58, D86, and N101 together coordinate S-adenosyl-L-methionine.

The protein belongs to the class I-like SAM-binding methyltransferase superfamily. rRNA adenine N(6)-methyltransferase family. RsmA subfamily.

Its subcellular location is the cytoplasm. The catalysed reaction is adenosine(1518)/adenosine(1519) in 16S rRNA + 4 S-adenosyl-L-methionine = N(6)-dimethyladenosine(1518)/N(6)-dimethyladenosine(1519) in 16S rRNA + 4 S-adenosyl-L-homocysteine + 4 H(+). Functionally, specifically dimethylates two adjacent adenosines (A1518 and A1519) in the loop of a conserved hairpin near the 3'-end of 16S rRNA in the 30S particle. May play a critical role in biogenesis of 30S subunits. This is Ribosomal RNA small subunit methyltransferase A from Helicobacter pylori (strain HPAG1).